Here is a 541-residue protein sequence, read N- to C-terminus: Periplasmic oligopeptide-binding protein OppA (541 aa).

Residues methionine 1–alanine 20 form the signal peptide.

Belongs to the bacterial solute-binding protein 5 family. The complex is composed of two ATP-binding proteins (OppD and OppF), two transmembrane proteins (OppB and OppC) and a solute-binding protein (OppA).

Its subcellular location is the periplasm. In terms of biological role, part of the ABC transporter complex OppABCDF involved in the uptake of oligopeptides. Plays an important nutritional role. Binds peptides containing from two to five amino acid residues. In Haemophilus influenzae (strain ATCC 51907 / DSM 11121 / KW20 / Rd), this protein is Periplasmic oligopeptide-binding protein OppA (oppA).